The sequence spans 309 residues: tRNA uridine(34) hydroxylase (309 aa).

Positions 126 to 220 constitute a Rhodanese domain; it reads SDPEVIVIDT…YLEQIPPEES (95 aa). The active-site Cysteine persulfide intermediate is Cys180.

This sequence belongs to the TrhO family.

It carries out the reaction uridine(34) in tRNA + AH2 + O2 = 5-hydroxyuridine(34) in tRNA + A + H2O. In terms of biological role, catalyzes oxygen-dependent 5-hydroxyuridine (ho5U) modification at position 34 in tRNAs. In Nostoc sp. (strain PCC 7120 / SAG 25.82 / UTEX 2576), this protein is tRNA uridine(34) hydroxylase.